The sequence spans 304 residues: Probable 5-dehydro-4-deoxyglucarate dehydratase (304 aa).

This sequence belongs to the DapA family.

The catalysed reaction is 5-dehydro-4-deoxy-D-glucarate + H(+) = 2,5-dioxopentanoate + CO2 + H2O. Its pathway is carbohydrate acid metabolism; D-glucarate degradation; 2,5-dioxopentanoate from D-glucarate: step 2/2. This is Probable 5-dehydro-4-deoxyglucarate dehydratase from Arthrobacter sp. (strain FB24).